Here is a 188-residue protein sequence, read N- to C-terminus: Acireductone dioxygenase (188 aa).

Residues H97, H99, E103, and H141 each contribute to the Fe(2+) site. The Ni(2+) site is built by H97, H99, E103, and H141.

It belongs to the acireductone dioxygenase (ARD) family. In terms of assembly, monomer. Requires Fe(2+) as cofactor. Ni(2+) is required as a cofactor.

It catalyses the reaction 1,2-dihydroxy-5-(methylsulfanyl)pent-1-en-3-one + O2 = 3-(methylsulfanyl)propanoate + CO + formate + 2 H(+). It carries out the reaction 1,2-dihydroxy-5-(methylsulfanyl)pent-1-en-3-one + O2 = 4-methylsulfanyl-2-oxobutanoate + formate + 2 H(+). It functions in the pathway amino-acid biosynthesis; L-methionine biosynthesis via salvage pathway; L-methionine from S-methyl-5-thio-alpha-D-ribose 1-phosphate: step 5/6. In terms of biological role, catalyzes 2 different reactions between oxygen and the acireductone 1,2-dihydroxy-3-keto-5-methylthiopentene (DHK-MTPene) depending upon the metal bound in the active site. Fe-containing acireductone dioxygenase (Fe-ARD) produces formate and 2-keto-4-methylthiobutyrate (KMTB), the alpha-ketoacid precursor of methionine in the methionine recycle pathway. Ni-containing acireductone dioxygenase (Ni-ARD) produces methylthiopropionate, carbon monoxide and formate, and does not lie on the methionine recycle pathway. This Xylella fastidiosa (strain M12) protein is Acireductone dioxygenase.